The primary structure comprises 206 residues: MLSAQLEAYLAEINLPATAEQKKQLLDFVGMLNKWNKAYNLTSVRDPEIMLVRHIMDSLVVSKHLQGDRFIDVGTGPGLPGIPLAIMNPDKTFVLLDSLGKRIRFQKQVAFELGIHNVSSIESRVEAYQPEQKFDGVLSRAFASIHDMLTWCHHLPAEHGQFYALKGQLSDDEMQHIPTGFAITETIELKVPRLDEQRHLLKIIKE.

S-adenosyl-L-methionine-binding positions include Gly-74, Leu-79, 125-126 (VE), and Arg-140.

This sequence belongs to the methyltransferase superfamily. RNA methyltransferase RsmG family.

The protein localises to the cytoplasm. The catalysed reaction is guanosine(527) in 16S rRNA + S-adenosyl-L-methionine = N(7)-methylguanosine(527) in 16S rRNA + S-adenosyl-L-homocysteine. Specifically methylates the N7 position of guanine in position 527 of 16S rRNA. In Shewanella oneidensis (strain ATCC 700550 / JCM 31522 / CIP 106686 / LMG 19005 / NCIMB 14063 / MR-1), this protein is Ribosomal RNA small subunit methyltransferase G.